The following is a 1865-amino-acid chain: Dedicator of cytokinesis protein 1 (1865 aa).

The region spanning 9–70 is the SH3 domain; it reads REEKYGVAFY…PASYIHLKEA (62 aa). Residues 425 to 609 form the C2 DOCK-type domain; that stretch reads RNDIYVTLVQ…DSFQISTLVC (185 aa). The DOCKER domain maps to 1207 to 1617; it reads YKEIEREEMY…VEKEYGVRIM (411 aa). Disordered stretches follow at residues 1619–1716 and 1732–1865; these read SSLD…EFKP and TISP…GIVQ. Residues 1639–1666 are compositionally biased toward low complexity; the sequence is PSSSRPLSVASVSSLSSDSTPSRPGSDG. Over residues 1680–1694 the composition is skewed to basic and acidic residues; it reads RSQDKLDKDDLEKEK. Ser-1681 is modified (phosphoserine). Residues 1687–1695 form a phosphoinositide-binding region; that stretch reads KDDLEKEKK. Basic residues predominate over residues 1695–1704; sequence KDKKKEKRNS. The segment covering 1705–1716 has biased composition (basic and acidic residues); sequence KHQEIFEKEFKP. 5 positions are modified to phosphoserine: Ser-1743, Ser-1751, Ser-1756, Ser-1761, and Ser-1764. The span at 1756–1766 shows a compositional bias: low complexity; it reads SVSPSSPSSQQ. Phosphothreonine occurs at positions 1767 and 1772. The interaction with NCK2 second and third SH3 domain (minor) stretch occupies residues 1793–1819; sequence ADVADVPPPLPLKGSVADYGNLMENQD. Positions 1799 to 1805 match the SH3-binding; interaction with CRK motif; the sequence is PPPLPLK. The segment at 1820-1836 is interaction with NCK2 third SH3 domain (major); the sequence is LLGSPTPPPPPPHQRHL. The segment covering 1824–1851 has biased composition (pro residues); that stretch reads PTPPPPPPHQRHLPPPLPSKTPPPPPPK. Residues 1837–1852 are interaction with NCK2 (minor); the sequence is PPPLPSKTPPPPPPKT. Residues 1838 to 1843 carry the SH3-binding; interaction with CRK motif; that stretch reads PPLPSK. Residues 1855–1865 are compositionally biased toward polar residues; sequence KQASVDSGIVQ. The residue at position 1858 (Ser-1858) is a Phosphoserine.

The protein belongs to the DOCK family. In terms of assembly, interacts with the SH3 domains of CRK and NCK2 via multiple sites. Interacts with nucleotide-free RAC1 via its DOCKER domain. Interacts with ELMO1, ELMO2 and probably ELMO3 via its SH3 domain. Interacts with ADGRB1. Identified in a complex with AUTS2 and ELMO2. As to expression, highly expressed in placenta, lung, kidney, pancreas and ovary. Expressed at intermediate level in thymus, testes and colon.

The protein localises to the cytoplasm. It is found in the membrane. Involved in cytoskeletal rearrangements required for phagocytosis of apoptotic cells and cell motility. Along with DOCK1, mediates CRK/CRKL regulation of epithelial and endothelial cell spreading and migration on type IV collagen. Functions as a guanine nucleotide exchange factor (GEF), which activates Rac Rho small GTPases by exchanging bound GDP for free GTP. Its GEF activity may be enhanced by ELMO1. In Homo sapiens (Human), this protein is Dedicator of cytokinesis protein 1 (DOCK1).